Here is an 83-residue protein sequence, read N- to C-terminus: Neurotoxin LmNaTx10 (83 aa).

The N-terminal stretch at Met1–Cys19 is a signal peptide. The region spanning Lys21 to His80 is the LCN-type CS-alpha/beta domain. Cystine bridges form between Cys31–Cys79, Cys35–Cys55, Cys41–Cys62, and Cys45–Cys64.

This sequence belongs to the long (4 C-C) scorpion toxin superfamily. Sodium channel inhibitor family. Alpha subfamily. In terms of tissue distribution, expressed by the venom gland.

The protein localises to the secreted. Binds voltage-independently at site-3 of voltage-gated sodium channels (Nav) and inhibits the inactivation of the activated channels, thereby blocking neuronal transmission. This is Neurotoxin LmNaTx10 from Lychas mucronatus (Chinese swimming scorpion).